The primary structure comprises 178 residues: ATP synthase subunit delta (178 aa).

Belongs to the ATPase delta chain family. F-type ATPases have 2 components, F(1) - the catalytic core - and F(0) - the membrane proton channel. F(1) has five subunits: alpha(3), beta(3), gamma(1), delta(1), epsilon(1). F(0) has three main subunits: a(1), b(2) and c(10-14). The alpha and beta chains form an alternating ring which encloses part of the gamma chain. F(1) is attached to F(0) by a central stalk formed by the gamma and epsilon chains, while a peripheral stalk is formed by the delta and b chains.

Its subcellular location is the cell membrane. In terms of biological role, f(1)F(0) ATP synthase produces ATP from ADP in the presence of a proton or sodium gradient. F-type ATPases consist of two structural domains, F(1) containing the extramembraneous catalytic core and F(0) containing the membrane proton channel, linked together by a central stalk and a peripheral stalk. During catalysis, ATP synthesis in the catalytic domain of F(1) is coupled via a rotary mechanism of the central stalk subunits to proton translocation. Its function is as follows. This protein is part of the stalk that links CF(0) to CF(1). It either transmits conformational changes from CF(0) to CF(1) or is implicated in proton conduction. This is ATP synthase subunit delta from Desulfitobacterium hafniense (strain Y51).